The sequence spans 444 residues: ATP-dependent protease ATPase subunit HslU (444 aa).

ATP contacts are provided by residues isoleucine 18, 60–65 (GVGKTE), aspartate 257, glutamate 322, and arginine 394.

It belongs to the ClpX chaperone family. HslU subfamily. A double ring-shaped homohexamer of HslV is capped on each side by a ring-shaped HslU homohexamer. The assembly of the HslU/HslV complex is dependent on binding of ATP.

The protein resides in the cytoplasm. In terms of biological role, ATPase subunit of a proteasome-like degradation complex; this subunit has chaperone activity. The binding of ATP and its subsequent hydrolysis by HslU are essential for unfolding of protein substrates subsequently hydrolyzed by HslV. HslU recognizes the N-terminal part of its protein substrates and unfolds these before they are guided to HslV for hydrolysis. This is ATP-dependent protease ATPase subunit HslU from Psychromonas ingrahamii (strain DSM 17664 / CCUG 51855 / 37).